A 414-amino-acid polypeptide reads, in one-letter code: Probable elongation factor 1-gamma 1 (414 aa).

The GST N-terminal domain occupies 1–82; that stretch reads MALVLHTYKG…YVSRLNGDNS (82 aa). The region spanning 87 to 215 is the GST C-terminal domain; the sequence is SLIEYAQIEQ…VKQTEAVPPI (129 aa). The segment covering 214 to 224 has biased composition (low complexity); the sequence is PIASKKAAQPA. The tract at residues 214–260 is disordered; it reads PIASKKAAQPAKPKEEPKKKEAPVAEAPKLAEEEEAPKPKAKNPLDL. Basic and acidic residues predominate over residues 225–236; that stretch reads KPKEEPKKKEAP. An EF-1-gamma C-terminal domain is found at 254-414; sequence AKNPLDLLPP…EALLDAKCFK (161 aa).

In terms of assembly, EF-1 is composed of four subunits: alpha, beta, delta, and gamma.

In terms of biological role, probably plays a role in anchoring the complex to other cellular components. In Arabidopsis thaliana (Mouse-ear cress), this protein is Probable elongation factor 1-gamma 1.